The sequence spans 976 residues: MQPSQSLRRGGEQSWWGSAPQYQYMPFEHCTSYGLPSENGALQHRLHRDAGLRANTRPTQIYGHYKQQFSDKEQDTGMSKKMGSSESMDSKDEDHYSKCQGCVRRLGHVVRRKLGEDWIFLVLLGLLMALVSWSMDYVSAKSLQAYKWSYYQMQPNLPLQYLVWVTFPLTLILFSAVFCHLISPQAVGSGIPEMKTILRGVILKEYLTLKAFVAKVVALTAGLGSGIPVGKEGPFVHIASICAAVLSKFMSMFCGVYEQPYYYTDMLTVGCAVGVGCCFGTPLGGVLFSIEVTSTYFAVRNYWRGFFAATFSAFVFRVLAVWNKDAVTITALFRTNFRMDFPFDLQELPAFAIIGICCGFLGAVFVYLHRQVMLGVRKHKALSQFLAKHRLLYPGIVTFIIASFTFPPGIGQFMAGELMPREAISTLFDNNTWVKHVGDPESLGRSAVWIHPRVNVIIIIFLFFIMKFWMSIVATTMPIPCGGFMPVFVLGAAFGRLVGEIMAMLFPDGILFDDIIYKILPGGYAVIGAAALTGAVSHTVSTAVICFELTGQIAHILPMMVAVILANMVAQSLQPSLYDSIIQVKKLPYLPDLGWNQLSKFTIFVEDIMVRDVKFVSATCTYGELRTLLQTTTVKTLPLVDSKDSMILLGSVERSELQSLLQRHLGPERRLRVAQDMARKLSELPYDGKGHQGISPEGRRESFAFVDEDEDEDLSGKPELPPLPPPHPLPSAPLSSEESNGPLPSHKQQPEAPEPADQRPSVFRSLLRCLLGRPRPTKKKTTQESMDLVDNMSPEEIEAWEQEQLSQPVCFDYCCIDQSPFQLVEQTSLHKTHTLFSLLGLHLAYVTSMGKLRGVLALEELQKAIEGHTKSGVQLRPPLASFRSTTSTRKNPGGPPPPTEAWSLPEDGTGAPASPEPPAPSPSPAPLLSEAPAKVEGELEELELGESPGLEEELADILQGPSLRSTDEEDEDELIL.

At 1–118 the chain is on the cytoplasmic side; it reads MQPSQSLRRG…VVRRKLGEDW (118 aa). Positions 71-92 are disordered; the sequence is DKEQDTGMSKKMGSSESMDSKD. Low complexity predominate over residues 77 to 87; it reads GMSKKMGSSES. Residues 119 to 150 form a helical membrane-spanning segment; the sequence is IFLVLLGLLMALVSWSMDYVSAKSLQAYKWSY. Residues 151 to 158 are Extracellular-facing; the sequence is YQMQPNLP. A helical transmembrane segment spans residues 159–179; the sequence is LQYLVWVTFPLTLILFSAVFC. Topologically, residues 180–183 are cytoplasmic; it reads HLIS. Positions 184–189 form an intramembrane region, note=Loop between two helices; sequence PQAVGS. The short motif at 188 to 192 is the Selectivity filter part_1 element; sequence GSGIP. Chloride is bound at residue S189. Positions 190-195 form an intramembrane region, helical; the sequence is GIPEMK. Over 196 to 208 the chain is Cytoplasmic; the sequence is TILRGVILKEYLT. Residues 209 to 224 constitute an intramembrane region (helical); sequence LKAFVAKVVALTAGLG. The segment at residues 225-230 is an intramembrane region (note=Loop between two helices); that stretch reads SGIPVG. The Selectivity filter part_2 motif lies at 230 to 234; that stretch reads GKEGP. Positions 231–246 form an intramembrane region, helical; that stretch reads KEGPFVHIASICAAVL. Residues 247 to 268 are Cytoplasmic-facing; sequence SKFMSMFCGVYEQPYYYTDMLT. 2 consecutive intramembrane regions (helical) follow at residues 269–280 and 281–290; these read VGCAVGVGCCFG and TPLGGVLFSI. Residues 291–301 lie on the Cytoplasmic side of the membrane; it reads EVTSTYFAVRN. A helical transmembrane segment spans residues 302–321; sequence YWRGFFAATFSAFVFRVLAV. Over 322–347 the chain is Extracellular; it reads WNKDAVTITALFRTNFRMDFPFDLQE. A helical membrane pass occupies residues 348–376; sequence LPAFAIIGICCGFLGAVFVYLHRQVMLGV. The Cytoplasmic portion of the chain corresponds to 377–390; sequence RKHKALSQFLAKHR. Residues 391-408 traverse the membrane as a helical segment; it reads LLYPGIVTFIIASFTFPP. The Extracellular portion of the chain corresponds to 409-414; that stretch reads GIGQFM. An intramembrane region (note=Loop between two helices) is located at residues 415 to 418; it reads AGEL. The segment at residues 419-426 is an intramembrane region (helical); that stretch reads MPREAIST. Residues 427–457 lie on the Extracellular side of the membrane; sequence LFDNNTWVKHVGDPESLGRSAVWIHPRVNVI. The segment at residues 458–475 is an intramembrane region (helical); that stretch reads IIIFLFFIMKFWMSIVAT. Positions 476-482 form an intramembrane region, note=Loop between two helices; the sequence is TMPIPCG. The short motif at 482–486 is the Selectivity filter part_3 element; it reads GGFMP. Residues 483–498 constitute an intramembrane region (helical); sequence GFMPVFVLGAAFGRLV. F484 serves as a coordination point for chloride. Residues 499 to 521 lie on the Extracellular side of the membrane; it reads GEIMAMLFPDGILFDDIIYKILP. An intramembrane region (helical) is located at residues 522 to 538; that stretch reads GGYAVIGAAALTGAVSH. An intramembrane region (note=Loop between two helices) is located at residues 539 to 540; sequence TV. The helical intramembrane region spans 541–554; the sequence is STAVICFELTGQIA. Residues 555–557 are Extracellular-facing; sequence HIL. The segment at residues 558–571 is an intramembrane region (helical); the sequence is PMMVAVILANMVAQ. Positions 572–575 form an intramembrane region, note=Loop between two helices; that stretch reads SLQP. The segment at residues 576–578 is an intramembrane region (helical); that stretch reads SLY. Y578 serves as a coordination point for chloride. At 579–976 the chain is on the cytoplasmic side; that stretch reads DSIIQVKKLP…DEEDEDELIL (398 aa). The CBS 1 domain maps to 609–668; sequence MVRDVKFVSATCTYGELRTLLQTTTVKTLPLVDSKDSMILLGSVERSELQSLLQRHLGPE. Residues 707–759 form a disordered region; the sequence is DEDEDEDLSGKPELPPLPPPHPLPSAPLSSEESNGPLPSHKQQPEAPEPADQR. The segment covering 719-731 has biased composition (pro residues); it reads ELPPLPPPHPLPS. Residues 816–871 form the CBS 2 domain; that stretch reads IDQSPFQLVEQTSLHKTHTLFSLLGLHLAYVTSMGKLRGVLALEELQKAIEGHTKS. The segment at 872-976 is disordered; it reads GVQLRPPLAS…DEEDEDELIL (105 aa). S881 carries the phosphoserine modification. Residues 914 to 925 show a composition bias toward pro residues; that stretch reads SPEPPAPSPSPA. 2 stretches are compositionally biased toward acidic residues: residues 938 to 955 and 967 to 976; these read ELEE…EELA and DEEDEDELIL.

The protein belongs to the chloride channel (TC 2.A.49) family. ClC-1/CLCN1 subfamily. Homodimer.

It is found in the cell membrane. The protein resides in the sarcolemma. Its subcellular location is the T-tubule. The enzyme catalyses chloride(in) = chloride(out). The catalysed reaction is thiocyanate(in) = thiocyanate(out). It catalyses the reaction bromide(in) = bromide(out). It carries out the reaction nitrate(in) = nitrate(out). The enzyme catalyses iodide(out) = iodide(in). Its activity is regulated as follows. Modulated by membrane voltage with depolarization favouring channel opening and hyperpolarization favouring channel closure. Inhibited by acidic pH and ATP binding due to a shift of voltage dependence of common gating to more positive voltages. Inhibited by 9-anthracene-carboxylic. Functionally, voltage-gated chloride channel involved in skeletal muscle excitability. Generates most of the plasma membrane chloride conductance in skeletal muscle fibers, stabilizes the resting membrane potential and contributes to the repolarization phase during action potential firing. Forms a homodimeric channel where each subunit has its own ion conduction pathway. Conducts double-barreled currents controlled by two types of gates, two fast glutamate gates that control each subunit independently and a slow common gate that opens and shuts off both subunits simultaneously. Has a significant open probability at muscle resting potential and is further activated upon membrane depolarization. Permeable to small monovalent anions with ion selectivity for chloride &gt; thiocyanate &gt; bromide &gt; nitrate &gt; iodide. The chain is Chloride channel protein 1 (CLCN1) from Canis lupus familiaris (Dog).